A 500-amino-acid chain; its full sequence is uncharacterized protein (500 aa).

The N-terminal stretch at 1–20 (MHSIIFKAAVALLGVSTAAG) is a signal peptide. Asn43 is a glycosylation site (N-linked (GlcNAc...) asparagine). The region spanning 60 to 232 (TALRPDCIIA…TAFTVKTHTQ (173 aa)) is the FAD-binding PCMH-type domain. His98 is subject to Pros-8alpha-FAD histidine. N-linked (GlcNAc...) asparagine glycosylation is found at Asn194, Asn201, Asn246, Asn299, and Asn414.

Belongs to the oxygen-dependent FAD-linked oxidoreductase family. FAD serves as cofactor.

Its subcellular location is the secreted. This is an uncharacterized protein from Arthroderma benhamiae (strain ATCC MYA-4681 / CBS 112371) (Trichophyton mentagrophytes).